A 124-amino-acid polypeptide reads, in one-letter code: MAPAELALTLAAAGAGSVLRYLLGGWVAHRMGPEFPWGTLAVNALGCLGLGLLQGAAPHDRALLLVLGSGLLAGFTTFSTLMLETANLATAGERDRAFSNIVGTLALGLFALSAGARAGAWAAG.

The next 4 helical transmembrane spans lie at 7-27 (ALTL…GGWV), 35-55 (FPWG…LLQG), 63-83 (LLLV…TLML), and 101-121 (IVGT…AGAW).

It belongs to the fluoride channel Fluc/FEX (TC 1.A.43) family.

The protein resides in the cell membrane. The enzyme catalyses fluoride(in) = fluoride(out). Its function is as follows. Fluoride-specific ion channel. Important for reducing fluoride concentration in the cell, thus reducing its toxicity. The sequence is that of Fluoride-specific ion channel FluC 1 from Rubrobacter xylanophilus (strain DSM 9941 / JCM 11954 / NBRC 16129 / PRD-1).